Here is a 310-residue protein sequence, read N- to C-terminus: Dicarboxylate carrier UCP2 (310 aa).

Residues 1–10 (MVGFRAGDVP) lie on the Mitochondrial intermembrane side of the membrane. A helical transmembrane segment spans residues 11-32 (PTATVKFIGAGTAACIADLFTF). Solcar repeat units follow at residues 11 to 107 (PTAT…VKQF), 115 to 204 (AGIG…IKDA), and 213 to 298 (DDLP…LKRA). The Mitochondrial matrix segment spans residues 33–78 (PLDTAKVRLQIQGENKASTNMGRGPVKYRGVFGTISTMVRVEGPRS). A helical membrane pass occupies residues 79-101 (LYSGLVAGLQRQMSFASVRIGLY). Residues 102-120 (DSVKQFYTKGSDHAGIGSR) lie on the Mitochondrial intermembrane side of the membrane. A helical transmembrane segment spans residues 121 to 137 (LMAGCTTGAMAVAVAQP). Topologically, residues 138-181 (TDVLKVRFQAQVSAGASKRYHSTMDAYRTIAKEEGFRGLWKGTG) are mitochondrial matrix. The chain crosses the membrane as a helical span at residues 182–198 (PNITRNAIVNCTELVTY). The Mitochondrial intermembrane segment spans residues 199 to 215 (DLIKDALLKSSLMTDDL). Residues 216-235 (PCHFTSAFGAGFCTTIIASP) traverse the membrane as a helical segment. Over 236-269 (VDVVKTRYMNSAQGQYSSALNCAVAMLTKKGPKA) the chain is Mitochondrial matrix. Residues 270 to 292 (FFKGFMPSFLRLGSWNVVMFVTY) traverse the membrane as a helical segment. The segment at 277 to 299 (SFLRLGSWNVVMFVTYEQLKRAM) is purine nucleotide binding. Topologically, residues 293–310 (EQLKRAMMAARQNWHTPL) are mitochondrial intermembrane.

The protein belongs to the mitochondrial carrier (TC 2.A.29) family. Homotetramer. Adopts an asymmetrical dimer of dimers functional form.

It is found in the mitochondrion inner membrane. It carries out the reaction L-aspartate(out) + phosphate(in) + H(+)(in) = L-aspartate(in) + phosphate(out) + H(+)(out). It catalyses the reaction oxaloacetate(out) + phosphate(in) + H(+)(in) = oxaloacetate(in) + phosphate(out) + H(+)(out). The enzyme catalyses (S)-malate(out) + phosphate(in) + H(+)(in) = (S)-malate(in) + phosphate(out) + H(+)(out). The catalysed reaction is malonate(out) + phosphate(in) + H(+)(in) = malonate(in) + phosphate(out) + H(+)(out). It carries out the reaction sulfate(out) + phosphate(in) + H(+)(in) = sulfate(in) + phosphate(out) + H(+)(out). It catalyses the reaction (S)-malate(out) = (S)-malate(in). The enzyme catalyses L-aspartate(out) = L-aspartate(in). The catalysed reaction is phosphate(in) = phosphate(out). It carries out the reaction chloride(in) = chloride(out). It catalyses the reaction H(+)(in) = H(+)(out). The enzyme catalyses a long-chain fatty acid(out) = a long-chain fatty acid(in). Its function is as follows. UCP are mitochondrial transporter proteins that create proton leaks across the inner mitochondrial membrane, thus uncoupling oxidative phosphorylation from ATP synthesis. As a result, energy is dissipated in the form of heat. In terms of biological role, antiporter that exports dicarboxylate intermediates of the Krebs cycle in exchange for phosphate plus a proton across the inner membrane of mitochondria, a process driven by mitochondrial motive force with an overall impact on glycolysis, glutaminolysis and glutathione-dependent redox balance. Continuous export of oxaloacetate and related four-carbon dicarboxylates from mitochondrial matrix into the cytosol negatively regulates the oxidation of acetyl-CoA substrates via the Krebs cycle, lowering the ATP/ADP ratio and reactive oxygen species (ROS) production. May mediate inducible proton entry into the mitochondrial matrix affecting ATP turnover as a protection mechanism against oxidative stress. The proton currents are most likely associated with fatty acid flipping across the inner membrane of mitochondria in a metabolic process regulated by free fatty acids and purine nucleotides. The sequence is that of Dicarboxylate carrier UCP2 (ucp2) from Danio rerio (Zebrafish).